Consider the following 200-residue polypeptide: 3-isopropylmalate dehydratase small subunit (200 aa).

It belongs to the LeuD family. LeuD type 1 subfamily. As to quaternary structure, heterodimer of LeuC and LeuD.

It catalyses the reaction (2R,3S)-3-isopropylmalate = (2S)-2-isopropylmalate. It participates in amino-acid biosynthesis; L-leucine biosynthesis; L-leucine from 3-methyl-2-oxobutanoate: step 2/4. Functionally, catalyzes the isomerization between 2-isopropylmalate and 3-isopropylmalate, via the formation of 2-isopropylmaleate. The sequence is that of 3-isopropylmalate dehydratase small subunit from Vibrio cholerae serotype O1 (strain ATCC 39541 / Classical Ogawa 395 / O395).